The sequence spans 485 residues: Glutamyl-tRNA(Gln) amidotransferase subunit A (485 aa).

Catalysis depends on charge relay system residues Lys78 and Ser153. The Acyl-ester intermediate role is filled by Ser177.

This sequence belongs to the amidase family. GatA subfamily. Heterotrimer of A, B and C subunits.

The catalysed reaction is L-glutamyl-tRNA(Gln) + L-glutamine + ATP + H2O = L-glutaminyl-tRNA(Gln) + L-glutamate + ADP + phosphate + H(+). Allows the formation of correctly charged Gln-tRNA(Gln) through the transamidation of misacylated Glu-tRNA(Gln) in organisms which lack glutaminyl-tRNA synthetase. The reaction takes place in the presence of glutamine and ATP through an activated gamma-phospho-Glu-tRNA(Gln). The protein is Glutamyl-tRNA(Gln) amidotransferase subunit A of Bacillus cereus (strain Q1).